We begin with the raw amino-acid sequence, 246 residues long: Type III pantothenate kinase (246 aa).

11 to 18 (DIGNSFIK) lines the ATP pocket. Substrate-binding positions include Y95 and 102 to 105 (GVDR). D104 (proton acceptor) is an active-site residue. D125 lines the K(+) pocket. Residue T128 coordinates ATP. Residue T179 participates in substrate binding.

It belongs to the type III pantothenate kinase family. As to quaternary structure, homodimer. Requires NH4(+) as cofactor. It depends on K(+) as a cofactor.

The protein resides in the cytoplasm. It carries out the reaction (R)-pantothenate + ATP = (R)-4'-phosphopantothenate + ADP + H(+). Its pathway is cofactor biosynthesis; coenzyme A biosynthesis; CoA from (R)-pantothenate: step 1/5. Functionally, catalyzes the phosphorylation of pantothenate (Pan), the first step in CoA biosynthesis. This chain is Type III pantothenate kinase, found in Pseudoalteromonas atlantica (strain T6c / ATCC BAA-1087).